The following is a 466-amino-acid chain: 3-isopropylmalate dehydratase large subunit (466 aa).

[4Fe-4S] cluster contacts are provided by Cys-347, Cys-407, and Cys-410.

The protein belongs to the aconitase/IPM isomerase family. LeuC type 1 subfamily. In terms of assembly, heterodimer of LeuC and LeuD. Requires [4Fe-4S] cluster as cofactor.

The catalysed reaction is (2R,3S)-3-isopropylmalate = (2S)-2-isopropylmalate. The protein operates within amino-acid biosynthesis; L-leucine biosynthesis; L-leucine from 3-methyl-2-oxobutanoate: step 2/4. Functionally, catalyzes the isomerization between 2-isopropylmalate and 3-isopropylmalate, via the formation of 2-isopropylmaleate. The polypeptide is 3-isopropylmalate dehydratase large subunit (Shewanella loihica (strain ATCC BAA-1088 / PV-4)).